Consider the following 490-residue polypeptide: Glutamyl-tRNA(Gln) amidotransferase subunit A (490 aa).

Residues Lys76 and Ser151 each act as charge relay system in the active site. Ser175 functions as the Acyl-ester intermediate in the catalytic mechanism.

Belongs to the amidase family. GatA subfamily. Heterotrimer of A, B and C subunits.

It catalyses the reaction L-glutamyl-tRNA(Gln) + L-glutamine + ATP + H2O = L-glutaminyl-tRNA(Gln) + L-glutamate + ADP + phosphate + H(+). Functionally, allows the formation of correctly charged Gln-tRNA(Gln) through the transamidation of misacylated Glu-tRNA(Gln) in organisms which lack glutaminyl-tRNA synthetase. The reaction takes place in the presence of glutamine and ATP through an activated gamma-phospho-Glu-tRNA(Gln). This is Glutamyl-tRNA(Gln) amidotransferase subunit A from Aromatoleum aromaticum (strain DSM 19018 / LMG 30748 / EbN1) (Azoarcus sp. (strain EbN1)).